Reading from the N-terminus, the 353-residue chain is 11-beta-hydroxysteroid dehydrogenase B (353 aa).

The helical; Signal-anchor for type II membrane protein transmembrane segment at 10–30 threads the bilayer; that stretch reads LFVPPASLITLAFSWPALCFP. The Proline-knob motif lies at 13–26; the sequence is PPASLITLAFSWPA. Residues 54–80 and Asp-105 each bind NADP(+); that span reads GASS…VARR. Ser-184 serves as a coordination point for substrate. Residue Tyr-197 is the Proton acceptor of the active site. NADP(+) is bound by residues 197–201 and Lys-201; that span reads YAAAK.

This sequence belongs to the short-chain dehydrogenases/reductases (SDR) family. As to expression, expressed in seeds (at protein level).

It localises to the lipid droplet. It is found in the membrane. The catalysed reaction is an 11beta-hydroxysteroid + NADP(+) = an 11-oxosteroid + NADPH + H(+). Functionally, has dehydrogenase activity against 11 beta-hydroxysteroid and 17 beta-hydroxysteroid. May be involved in signal transduction regulated by various sterols. This is 11-beta-hydroxysteroid dehydrogenase B from Arachis hypogaea (Peanut).